The following is a 130-amino-acid chain: Gonadotropin subunit beta-1 (130 aa).

A signal peptide spans 1–18 (MRMHFVVMVMLLPALMMA). 5 disulfides stabilise this stretch: C26–C74, C40–C89, C51–C105, C55–C107, and C110–C117. N-linked (GlcNAc...) asparagine glycosylation is present at N30.

This sequence belongs to the glycoprotein hormones subunit beta family. Heterodimer of an alpha and a beta chain.

It localises to the secreted. Functionally, involved in gametogenesis and steroidogenesis. The sequence is that of Gonadotropin subunit beta-1 (cgba) from Cyprinus carpio (Common carp).